Here is a 77-residue protein sequence, read N- to C-terminus: UPF0349 protein lmo2392 (77 aa).

Belongs to the UPF0349 family.

This chain is UPF0349 protein lmo2392, found in Listeria monocytogenes serovar 1/2a (strain ATCC BAA-679 / EGD-e).